A 1048-amino-acid chain; its full sequence is uncharacterized protein (1048 aa).

The disordered stretch occupies residues 601 to 629 (ENQINEEQQTNVENEQQTEQQFENEDKET). Residues 605–621 (NEEQQTNVENEQQTEQQ) show a composition bias toward low complexity.

This is an uncharacterized protein from Methanocaldococcus jannaschii (strain ATCC 43067 / DSM 2661 / JAL-1 / JCM 10045 / NBRC 100440) (Methanococcus jannaschii).